The chain runs to 184 residues: NADH-quinone oxidoreductase subunit B (184 aa).

Positions 37, 38, 103, and 132 each coordinate [4Fe-4S] cluster.

The protein belongs to the complex I 20 kDa subunit family. As to quaternary structure, NDH-1 is composed of 14 different subunits. Subunits NuoB, C, D, E, F, and G constitute the peripheral sector of the complex. [4Fe-4S] cluster serves as cofactor.

The protein resides in the cell membrane. The enzyme catalyses a quinone + NADH + 5 H(+)(in) = a quinol + NAD(+) + 4 H(+)(out). NDH-1 shuttles electrons from NADH, via FMN and iron-sulfur (Fe-S) centers, to quinones in the respiratory chain. The immediate electron acceptor for the enzyme in this species is believed to be a menaquinone. Couples the redox reaction to proton translocation (for every two electrons transferred, four hydrogen ions are translocated across the cytoplasmic membrane), and thus conserves the redox energy in a proton gradient. The sequence is that of NADH-quinone oxidoreductase subunit B from Nocardia farcinica (strain IFM 10152).